The chain runs to 359 residues: Homoserine O-acetyltransferase (359 aa).

Residues 49–332 enclose the AB hydrolase-1 domain; sequence VLICHALTGS…QSSYGHDAFL (284 aa). Ser-143 serves as the catalytic Nucleophile. Arg-212 contributes to the substrate binding site. Catalysis depends on residues Asp-299 and His-328. Residue Asp-329 participates in substrate binding.

The protein belongs to the AB hydrolase superfamily. MetX family. Homodimer.

It localises to the cytoplasm. The catalysed reaction is L-homoserine + acetyl-CoA = O-acetyl-L-homoserine + CoA. The protein operates within amino-acid biosynthesis; L-methionine biosynthesis via de novo pathway; O-acetyl-L-homoserine from L-homoserine: step 1/1. In terms of biological role, transfers an acetyl group from acetyl-CoA to L-homoserine, forming acetyl-L-homoserine. The polypeptide is Homoserine O-acetyltransferase (Trichormus variabilis (strain ATCC 29413 / PCC 7937) (Anabaena variabilis)).